The primary structure comprises 492 residues: GlcNAc-binding protein A (492 aa).

A signal peptide spans 1–23 (MNKSSTKTLIALSMMAVSSGVSA). Residues 24–204 (HGYVSETNDG…AFYNVIDVKF (181 aa)) form the Chitin-binding type-4 domain. A Chitin-binding type-3 domain is found at 443–484 (AGTKVLAEDGNVYQCKEFPYSGYCVQWTETATNFAPGVGSDW).

Belongs to the GbpA family.

The protein resides in the secreted. Probably interacts with GlcNAc residues. May promote attachment to both epithelial cell surfaces and chitin. The sequence is that of GlcNAc-binding protein A from Aliivibrio fischeri (strain ATCC 700601 / ES114) (Vibrio fischeri).